Reading from the N-terminus, the 261-residue chain is uncharacterized protein (261 aa).

22-46 (IVTGGNSGLGQAFAMALAKAGANIF) contributes to the NADP(+) binding site. Ser153 is a binding site for substrate. Catalysis depends on Tyr166, which acts as the Proton acceptor.

It belongs to the short-chain dehydrogenases/reductases (SDR) family.

This is an uncharacterized protein from Escherichia coli (strain K12).